Reading from the N-terminus, the 264-residue chain is tRNA pseudouridine synthase A (264 aa).

Aspartate 56 functions as the Nucleophile in the catalytic mechanism. Tyrosine 114 is a binding site for substrate.

It belongs to the tRNA pseudouridine synthase TruA family. In terms of assembly, homodimer.

It catalyses the reaction uridine(38/39/40) in tRNA = pseudouridine(38/39/40) in tRNA. Functionally, formation of pseudouridine at positions 38, 39 and 40 in the anticodon stem and loop of transfer RNAs. The polypeptide is tRNA pseudouridine synthase A (Buchnera aphidicola subsp. Baizongia pistaciae (strain Bp)).